A 151-amino-acid chain; its full sequence is SsrA-binding protein (151 aa).

The protein belongs to the SmpB family.

Its subcellular location is the cytoplasm. Its function is as follows. Required for rescue of stalled ribosomes mediated by trans-translation. Binds to transfer-messenger RNA (tmRNA), required for stable association of tmRNA with ribosomes. tmRNA and SmpB together mimic tRNA shape, replacing the anticodon stem-loop with SmpB. tmRNA is encoded by the ssrA gene; the 2 termini fold to resemble tRNA(Ala) and it encodes a 'tag peptide', a short internal open reading frame. During trans-translation Ala-aminoacylated tmRNA acts like a tRNA, entering the A-site of stalled ribosomes, displacing the stalled mRNA. The ribosome then switches to translate the ORF on the tmRNA; the nascent peptide is terminated with the 'tag peptide' encoded by the tmRNA and targeted for degradation. The ribosome is freed to recommence translation, which seems to be the essential function of trans-translation. The sequence is that of SsrA-binding protein from Chlamydia pneumoniae (Chlamydophila pneumoniae).